Reading from the N-terminus, the 130-residue chain is Ion transport peptide (130 aa).

Intrachain disulfides connect C62–C98, C78–C94, and C81–C107. L127 carries the post-translational modification Leucine amide.

The protein belongs to the arthropod CHH/MIH/GIH/VIH hormone family. As to expression, brain and corpus cardiacum.

It localises to the secreted. In terms of biological role, stimulates salt and water reabsorption and inhibits acid secretion in the ileum of S.gregaria. The sequence is that of Ion transport peptide from Schistocerca gregaria (Desert locust).